We begin with the raw amino-acid sequence, 156 residues long: SsrA-binding protein (156 aa).

It belongs to the SmpB family.

It is found in the cytoplasm. Required for rescue of stalled ribosomes mediated by trans-translation. Binds to transfer-messenger RNA (tmRNA), required for stable association of tmRNA with ribosomes. tmRNA and SmpB together mimic tRNA shape, replacing the anticodon stem-loop with SmpB. tmRNA is encoded by the ssrA gene; the 2 termini fold to resemble tRNA(Ala) and it encodes a 'tag peptide', a short internal open reading frame. During trans-translation Ala-aminoacylated tmRNA acts like a tRNA, entering the A-site of stalled ribosomes, displacing the stalled mRNA. The ribosome then switches to translate the ORF on the tmRNA; the nascent peptide is terminated with the 'tag peptide' encoded by the tmRNA and targeted for degradation. The ribosome is freed to recommence translation, which seems to be the essential function of trans-translation. The chain is SsrA-binding protein from Clostridium perfringens (strain 13 / Type A).